We begin with the raw amino-acid sequence, 527 residues long: Sulfate adenylyltransferase (527 aa).

The tract at residues 1-176 is N-terminal; it reads MPIPTPHGGK…LQGINYPKHY (176 aa). Residues 177 to 406 are catalytic; that stretch reads DYVDARKTPT…LRETNPPRSK (230 aa). Gln206 contributes to the sulfate binding site. ATP is bound by residues 206 to 209 and 302 to 305; these read QTRN and GRDH. Residues Thr207, Arg208, and Asn209 contribute to the active site. Arg208 provides a ligand contact to sulfate. Ala306 provides a ligand contact to sulfate. Position 344 (Val344) interacts with ATP. Residues 407-527 are required for oligomerization; adenylyl-sulfate kinase-like; the sequence is QGFAILIDNS…VNYLKDQGFY (121 aa).

The protein belongs to the sulfate adenylyltransferase family. As to quaternary structure, homohexamer. Dimer of trimers.

It localises to the cytoplasm. It carries out the reaction sulfate + ATP + H(+) = adenosine 5'-phosphosulfate + diphosphate. Its pathway is sulfur metabolism; hydrogen sulfide biosynthesis; sulfite from sulfate: step 1/3. Its function is as follows. Catalyzes the first intracellular reaction of sulfate assimilation, forming adenosine-5'-phosphosulfate (APS) from inorganic sulfate and ATP. Plays an important role in sulfate activation as a component of the biosynthesis pathway of sulfur-containing amino acids. In Candida albicans (strain SC5314 / ATCC MYA-2876) (Yeast), this protein is Sulfate adenylyltransferase.